Here is a 64-residue protein sequence, read N- to C-terminus: PYLa/PGLa A (64 aa).

The first 20 residues, 1–20 (MYKQIFLCLIIAALCATIMA), serve as a signal peptide directing secretion. Positions 21–35 (EASAFADADEDDDKR) are excised as a propeptide. At L59 the chain carries Leucine amide. A propeptide spanning residues 60–64 (GRRDS) is cleaved from the precursor.

It belongs to the gastrin/cholecystokinin family. Magainin subfamily. In terms of tissue distribution, expressed by the skin glands. Synthesized in the stomach and stored in a novel granular multinucleated cell in the gastric mucosa. Stored as active, processed peptides in large granules within the granular gland secretions of the skin.

It is found in the secreted. Functionally, PGLa and PGLa-H display a broad-spectrum of antibacterial activity against a range of Gram-positive and Gram-negative bacteria. PGLa also displays antifungal activity against C.albicans ATCC 14053. PGLa-H shows moderate antibacterial activity against the multidrug-resistant methicillin-resistant S.aureus (MRSA) but exhibits very little hemolytic activity. The protein is PYLa/PGLa A (pgla-a) of Xenopus laevis (African clawed frog).